Reading from the N-terminus, the 422-residue chain is Mitochondrial distribution and morphology protein 12 (422 aa).

Positions 1–386 (MSFDINWNQL…WPSWICIDMN (386 aa)) constitute an SMP-LTD domain. 2 disordered regions span residues 74-134 (GATN…HDLG) and 387-422 (DDGD…THEV). Composition is skewed to acidic residues over residues 109–130 (FDDD…EYDD) and 387–401 (DDGD…EDSN). Basic and acidic residues predominate over residues 405–422 (GDGKDNDGKHGDGPTHEV).

Belongs to the MDM12 family. In terms of assembly, component of the ER-mitochondria encounter structure (ERMES) or MDM complex, composed of MMM1, MDM10, MDM12 and MDM34. An MMM1 homodimer associates with one molecule of MDM12 on each side in a pairwise head-to-tail manner, and the SMP-LTD domains of MMM1 and MDM12 generate a continuous hydrophobic tunnel for phospholipid trafficking.

It is found in the mitochondrion outer membrane. The protein resides in the endoplasmic reticulum membrane. In terms of biological role, component of the ERMES/MDM complex, which serves as a molecular tether to connect the endoplasmic reticulum (ER) and mitochondria. Components of this complex are involved in the control of mitochondrial shape and protein biogenesis, and function in nonvesicular lipid trafficking between the ER and mitochondria. MDM12 is required for the interaction of the ER-resident membrane protein MMM1 and the outer mitochondrial membrane-resident beta-barrel protein MDM10. The MDM12-MMM1 subcomplex functions in the major beta-barrel assembly pathway that is responsible for biogenesis of all mitochondrial outer membrane beta-barrel proteins, and acts in a late step after the SAM complex. The MDM10-MDM12-MMM1 subcomplex further acts in the TOM40-specific pathway after the action of the MDM12-MMM1 complex. Essential for establishing and maintaining the structure of mitochondria and maintenance of mtDNA nucleoids. This chain is Mitochondrial distribution and morphology protein 12, found in Candida dubliniensis (strain CD36 / ATCC MYA-646 / CBS 7987 / NCPF 3949 / NRRL Y-17841) (Yeast).